The sequence spans 176 residues: Pro-glucagon (176 aa).

Positions 1-20 are cleaved as a signal peptide; the sequence is MKSLYFVAGLLVMLAQGSWQ. Positions 25-35 are enriched in polar residues; it reads NTEEKSSSFPA. The segment at 25–59 is disordered; it reads NTEEKSSSFPAPQTDPLGDPDQISEDKRHSQGTFT. Position 54 is a phosphoserine (serine 54). A propeptide spanning residues 84 to 89 is cleaved from the precursor; that stretch reads NKNNIA. Phosphoserine is present on residues serine 105 and serine 108. Arginine 127 carries the arginine amide modification. A propeptide spanning residues 131–145 is cleaved from the precursor; the sequence is DFPEEVNIVEELRRR. Residues serine 150 and serine 152 each carry the phosphoserine modification.

It belongs to the glucagon family. In terms of processing, proglucagon is post-translationally processed in a tissue-specific manner in pancreatic A cells and intestinal L cells. In pancreatic A cells, the major bioactive hormone is glucagon cleaved by PCSK2/PC2. In the intestinal L cells PCSK1/PC1 liberates GLP-1, GLP-2, glicentin and oxyntomodulin. GLP-1 is further N-terminally truncated by post-translational processing in the intestinal L cells resulting in GLP-1(7-37) GLP-1-(7-36)amide. The C-terminal amidation is neither important for the metabolism of GLP-1 nor for its effects on the endocrine pancreas. In terms of tissue distribution, glucagon is secreted in the A cells of the islets of Langerhans. GLP-1, GLP-2, oxyntomodulin and glicentin are secreted from enteroendocrine cells throughout the gastrointestinal tract. GLP-1 and GLP-2 are also secreted in selected neurons in the brain.

It localises to the secreted. Functionally, plays a key role in glucose metabolism and homeostasis. Regulates blood glucose by increasing gluconeogenesis and decreasing glycolysis. A counterregulatory hormone of insulin, raises plasma glucose levels in response to insulin-induced hypoglycemia. Plays an important role in initiating and maintaining hyperglycemic conditions in diabetes. Its function is as follows. Potent stimulator of glucose-dependent insulin release. Also stimulates insulin release in response to IL6. Plays important roles on gastric motility and the suppression of plasma glucagon levels. May be involved in the suppression of satiety and stimulation of glucose disposal in peripheral tissues, independent of the actions of insulin. Has growth-promoting activities on intestinal epithelium. May also regulate the hypothalamic pituitary axis (HPA) via effects on LH, TSH, CRH, oxytocin, and vasopressin secretion. Increases islet mass through stimulation of islet neogenesis and pancreatic beta cell proliferation. Inhibits beta cell apoptosis. Stimulates intestinal growth and up-regulates villus height in the small intestine, concomitant with increased crypt cell proliferation and decreased enterocyte apoptosis. The gastrointestinal tract, from the stomach to the colon is the principal target for GLP-2 action. Plays a key role in nutrient homeostasis, enhancing nutrient assimilation through enhanced gastrointestinal function, as well as increasing nutrient disposal. Stimulates intestinal glucose transport and decreases mucosal permeability. In terms of biological role, significantly reduces food intake. Inhibits gastric emptying in humans. Suppression of gastric emptying may lead to increased gastric distension, which may contribute to satiety by causing a sensation of fullness. Functionally, may modulate gastric acid secretion and the gastro-pyloro-duodenal activity. May play an important role in intestinal mucosal growth in the early period of life. In Ovis aries (Sheep), this protein is Pro-glucagon (GCG).